Here is a 1460-residue protein sequence, read N- to C-terminus: CLIP-associating protein 1-A (1460 aa).

HEAT repeat units follow at residues 87–124 (TQLGTVLPSLMDRLGDAKDSVREQDQSLLIKIMEQASN) and 163–200 (LTLSKIVPHICNLLGDPNSQVRDAAINCLVEIYRHVGE). The tract at residues 237–293 (SDKNFDDEDSVDGNRPSSASSSASSKAPQTARRGVSLGTARRPGPSSAAAKTGGTAK) is disordered. The span at 279–293 (PGPSSAAAKTGGTAK) shows a compositional bias: low complexity. HEAT repeat units lie at residues 407 to 442 (HGAEAIMPTVFNLVPNSAKIMATSGIVAIRLIIRHT) and 443 to 479 (HVPRLIPIITSNCTSKSVAVRRRCYDFLDLLLQEWQT). Disordered regions lie at residues 545–605 (SDSI…IDVN), 640–733 (IRTR…RFGI), and 778–800 (PYGMYSDDDANSDASSACSERSY). The span at 550 to 569 (SLPQSDRSSSSSQESLNRPL) shows a compositional bias: low complexity. Residues 571-597 (TKRSPTGSTVSRASSTTSKSTPGSLQR) are compositionally biased toward polar residues. The segment covering 645–659 (QSSGSTTSTASTPAD) has biased composition (low complexity). Composition is skewed to polar residues over residues 669 to 681 (VSQSQPGSRSNSP) and 715 to 724 (QGCSRETSPS). Residues 789–800 (SDASSACSERSY) show a composition bias toward low complexity. Residues 942–979 (FIVDQTQTPNLKVKVAILKYIESLARQMDPTDFVNSSE) form an HEAT 5 repeat. A disordered region spans residues 1041-1084 (LKNSSNSSMGSPSNTIGRTPSRHSSSRASPLTSPTNCSHGGLSP). Low complexity predominate over residues 1042–1054 (KNSSNSSMGSPSN). Positions 1066-1078 (SRASPLTSPTNCS) are enriched in polar residues. HEAT repeat units lie at residues 1272–1309 (LLLETLGDKDHAIRALALRVLREILRNQPARFKNYAEL) and 1390–1427 (GLLQGYDNTESSVRKASVFCLVAIYSVIGEELKPYLAQ).

The protein belongs to the CLASP family.

It is found in the cytoplasm. It localises to the cytoskeleton. The protein localises to the microtubule organizing center. The protein resides in the centrosome. Its subcellular location is the chromosome. It is found in the centromere. It localises to the kinetochore. The protein localises to the spindle. The protein resides in the golgi apparatus. Its subcellular location is the trans-Golgi network. In terms of biological role, microtubule plus-end tracking protein that promotes the stabilization of dynamic microtubules during anaphase. Plays a crucial role in chromatin-induced microtubule formation. May also act at microtubule minus ends. May be involved in the nucleation of noncentrosomal microtubules originating from the trans-Golgi network (TGN). In Xenopus laevis (African clawed frog), this protein is CLIP-associating protein 1-A (clasp1-a).